We begin with the raw amino-acid sequence, 249 residues long: Triosephosphate isomerase (249 aa).

Positions 12 and 14 each coordinate substrate. An N6-acetyllysine modification is found at lysine 14. Position 68 is a 3'-nitrotyrosine (tyrosine 68). Serine 80 bears the Phosphoserine mark. The Electrophile role is filled by histidine 96. Position 106 is a phosphoserine (serine 106). Residue lysine 142 forms a Glycyl lysine isopeptide (Lys-Gly) (interchain with G-Cter in SUMO1) linkage. Lysine 149 carries the post-translational modification N6-succinyllysine. Residue lysine 156 is modified to N6-acetyllysine; alternate. Residue lysine 156 is modified to N6-succinyllysine; alternate. Phosphoserine is present on serine 159. The Proton acceptor role is filled by glutamate 166. The residue at position 173 (threonine 173) is a Phosphothreonine. Lysine 194 bears the N6-acetyllysine; alternate mark. Lysine 194 bears the N6-succinyllysine; alternate mark. Position 194 is an N6-methyllysine; alternate (lysine 194). Serine 198 carries the phosphoserine modification. Residue tyrosine 209 is modified to 3'-nitrotyrosine. Serine 212 carries the post-translational modification Phosphoserine. Threonine 214 bears the Phosphothreonine mark. Serine 223 is modified (phosphoserine). Position 238 is an N6-acetyllysine (lysine 238).

It belongs to the triosephosphate isomerase family. In terms of assembly, homodimer.

Its subcellular location is the cytoplasm. The enzyme catalyses dihydroxyacetone phosphate = methylglyoxal + phosphate. It carries out the reaction D-glyceraldehyde 3-phosphate = dihydroxyacetone phosphate. Its pathway is carbohydrate degradation; glycolysis; D-glyceraldehyde 3-phosphate from glycerone phosphate: step 1/1. It functions in the pathway carbohydrate biosynthesis; gluconeogenesis. Triosephosphate isomerase is an extremely efficient metabolic enzyme that catalyzes the interconversion between dihydroxyacetone phosphate (DHAP) and D-glyceraldehyde-3-phosphate (G3P) in glycolysis and gluconeogenesis. Its function is as follows. It is also responsible for the non-negligible production of methylglyoxal a reactive cytotoxic side-product that modifies and can alter proteins, DNA and lipids. This chain is Triosephosphate isomerase (TPI1), found in Macaca fascicularis (Crab-eating macaque).